Here is a 652-residue protein sequence, read N- to C-terminus: NADH-ubiquinone oxidoreductase chain 5 (652 aa).

16 helical membrane passes run Met-1 to Arg-21, Leu-30 to Val-50, Ile-72 to Ile-92, Leu-119 to Gly-139, Trp-140 to Ala-160, Phe-177 to Val-197, Leu-200 to Ala-220, Thr-241 to Met-261, Leu-274 to Phe-294, Val-301 to Leu-319, Asn-331 to Ala-351, Phe-365 to Phe-385, Phe-403 to Leu-423, Leu-454 to Thr-474, Phe-505 to Ile-525, and Leu-619 to Leu-639.

Belongs to the complex I subunit 5 family.

It is found in the mitochondrion inner membrane. The enzyme catalyses a ubiquinone + NADH + 5 H(+)(in) = a ubiquinol + NAD(+) + 4 H(+)(out). In terms of biological role, core subunit of the mitochondrial membrane respiratory chain NADH dehydrogenase (Complex I) that is believed to belong to the minimal assembly required for catalysis. Complex I functions in the transfer of electrons from NADH to the respiratory chain. The immediate electron acceptor for the enzyme is believed to be ubiquinone. This is NADH-ubiquinone oxidoreductase chain 5 (ND5) from Podospora anserina (strain S / ATCC MYA-4624 / DSM 980 / FGSC 10383) (Pleurage anserina).